Consider the following 347-residue polypeptide: Protein POOR HOMOLOGOUS SYNAPSIS 1 (347 aa).

It is found in the cytoplasm. In terms of biological role, required for accurate chromosome segregation in meiosis. Required for pairing to occur between homologous chromosomes. Acts in early recombination steps and ensures pairing fidelity and proper repair of meiotic DNA double-strand-breaks. Regulates recombination and pairing of homologous chromosomes during meiotic prophase by controlling transport of RAD50 from cytoplasm to the nucleus. May affect pairing of the gene-rich fraction of the genome rather than preventing pairing between repetitive DNA elements. The protein is Protein POOR HOMOLOGOUS SYNAPSIS 1 of Zea mays (Maize).